A 332-amino-acid chain; its full sequence is Phosphate acetyltransferase (332 aa).

The protein belongs to the phosphate acetyltransferase and butyryltransferase family.

The protein resides in the cytoplasm. It catalyses the reaction acetyl-CoA + phosphate = acetyl phosphate + CoA. The protein operates within metabolic intermediate biosynthesis; acetyl-CoA biosynthesis; acetyl-CoA from acetate: step 2/2. The protein is Phosphate acetyltransferase (pta) of Acetivibrio thermocellus (strain ATCC 27405 / DSM 1237 / JCM 9322 / NBRC 103400 / NCIMB 10682 / NRRL B-4536 / VPI 7372) (Clostridium thermocellum).